Reading from the N-terminus, the 90-residue chain is Probable Fe(2+)-trafficking protein (90 aa).

It belongs to the Fe(2+)-trafficking protein family.

Functionally, could be a mediator in iron transactions between iron acquisition and iron-requiring processes, such as synthesis and/or repair of Fe-S clusters in biosynthetic enzymes. The sequence is that of Probable Fe(2+)-trafficking protein from Coxiella burnetii (strain CbuK_Q154) (Coxiella burnetii (strain Q154)).